The chain runs to 641 residues: Soluble starch synthase 1, chloroplastic/amyloplastic (641 aa).

Lysine 145 contacts ADP-alpha-D-glucose.

The protein belongs to the glycosyltransferase 1 family. Bacterial/plant glycogen synthase subfamily. In terms of tissue distribution, high expression in leaves and very low in tubers.

The protein localises to the plastid. It localises to the chloroplast. Its subcellular location is the amyloplast. The catalysed reaction is [(1-&gt;4)-alpha-D-glucosyl](n) + ADP-alpha-D-glucose = [(1-&gt;4)-alpha-D-glucosyl](n+1) + ADP + H(+). Its pathway is glycan biosynthesis; starch biosynthesis. Functionally, plays a minor role in starch synthesis in storage organs (tubers), but may contribute to the deposition of transient starch in chloroplasts of leaves. The polypeptide is Soluble starch synthase 1, chloroplastic/amyloplastic (Solanum tuberosum (Potato)).